Here is a 328-residue protein sequence, read N- to C-terminus: Phenylalanine--tRNA ligase alpha subunit (328 aa).

Glu-253 serves as a coordination point for Mg(2+).

This sequence belongs to the class-II aminoacyl-tRNA synthetase family. Phe-tRNA synthetase alpha subunit type 1 subfamily. As to quaternary structure, tetramer of two alpha and two beta subunits. Mg(2+) is required as a cofactor.

The protein resides in the cytoplasm. It carries out the reaction tRNA(Phe) + L-phenylalanine + ATP = L-phenylalanyl-tRNA(Phe) + AMP + diphosphate + H(+). This is Phenylalanine--tRNA ligase alpha subunit from Chromobacterium violaceum (strain ATCC 12472 / DSM 30191 / JCM 1249 / CCUG 213 / NBRC 12614 / NCIMB 9131 / NCTC 9757 / MK).